A 182-amino-acid chain; its full sequence is Succinate dehydrogenase [ubiquinone] cytochrome b small subunit, mitochondrial (182 aa).

The Mitochondrial matrix segment spans residues 1-71 (MSLSLLLRGA…SAPRMASAGS (71 aa)). A helical transmembrane segment spans residues 72–96 (SHTLLWTVERIVSAGLLAVIPAAFI). At 97–101 (APSQV) the chain is on the mitochondrial intermembrane side. Residues 102–122 (LDALMAISVVIHTHWGVEAMV) form a helical membrane-spanning segment. His-113 serves as a coordination point for heme. At 123-135 (VDYMRPSVVGNVL) the chain is on the mitochondrial matrix side. Tyr-125 lines the a ubiquinone pocket. Residues 136–157 (PKVAHIALIIISVATLGGLFYF) traverse the membrane as a helical segment. Topologically, residues 158 to 182 (IQNDVGLANGIKRFWAIKGKDAEKA) are mitochondrial intermembrane.

It belongs to the CybS family. Forms part of complex II containing four subunits: a flavoprotein (FP), an iron-sulfur protein (IP) and a cytochrome b composed of a large and a small subunit.

Its subcellular location is the mitochondrion inner membrane. Its pathway is carbohydrate metabolism; tricarboxylic acid cycle. In terms of biological role, membrane-anchoring subunit of succinate dehydrogenase (SDH) that is involved in complex II of the mitochondrial electron transport chain and is responsible for transferring electrons from succinate to ubiquinone (coenzyme Q). This chain is Succinate dehydrogenase [ubiquinone] cytochrome b small subunit, mitochondrial, found in Drosophila melanogaster (Fruit fly).